The sequence spans 139 residues: Peptide methionine sulfoxide reductase MsrB (139 aa).

The MsrB domain occupies 17–139 (EEQWRRELSP…NSAALKLEPK (123 aa)). Residues cysteine 56, cysteine 59, cysteine 105, and cysteine 108 each coordinate Zn(2+). Cysteine 128 acts as the Nucleophile in catalysis.

The protein belongs to the MsrB Met sulfoxide reductase family. Zn(2+) serves as cofactor.

It catalyses the reaction L-methionyl-[protein] + [thioredoxin]-disulfide + H2O = L-methionyl-(R)-S-oxide-[protein] + [thioredoxin]-dithiol. The sequence is that of Peptide methionine sulfoxide reductase MsrB from Bradyrhizobium diazoefficiens (strain JCM 10833 / BCRC 13528 / IAM 13628 / NBRC 14792 / USDA 110).